We begin with the raw amino-acid sequence, 468 residues long: MSPTGFTRAAAAPPPTLSRHAADTARLAAPLAIAQLSQMAMSVTDTVLLGSLGPDALAAGGLGANLSFVVVTLLQGVLTSVSVSVAHARGAMAEDRVPHIYWTGFALSLLLAVPAFALLSFAQPLLLAFGEPAALARNVGEYAAVLRFAAPGSLIGVGLMRSFLPAIGAAKRLLWVSLAGVGVNAFLNYGLIHGAFGLPRLGFLGSATATTITIWLTAITLVALLHGRSTFRHFVAATRPRLPLMGELFGIGWPVAITYGVESTLFLATGLTVGVLGESSLAAHQIALNVASVAFMVPLAIGQAANVRVGYWAGAGAPVAARHAGFVALGLGVAFMSLSGLVLIVAPHAIVGLYLKLDDPANARTVVLATSLLGIAAVFQIVDGMQTVGSGCLRGLKDTRVPMLAAMLGYWGIGFPTGYWFAFHAGLGARGLWWGLAAGLASVAMLMTWRFHRKSAALGVRADARGQA.

The next 11 membrane-spanning stretches (helical) occupy residues 57-79 (LAAG…GVLT), 100-122 (IYWT…LSFA), 142-164 (YAAV…RSFL), 173-195 (LLWV…IHGA), 205-227 (GSAT…LLHG), 248-270 (LFGI…LATG), 280-302 (SLAA…LAIG), 323-345 (HAGF…VLIV), 360-382 (PANA…FQIV), 401-423 (VPML…WFAF), and 433-452 (WWGL…WRFH).

It belongs to the multi antimicrobial extrusion (MATE) (TC 2.A.66.1) family.

The protein resides in the cell inner membrane. Functionally, multidrug efflux pump. This is Probable multidrug resistance protein NorM (norM) from Burkholderia pseudomallei (strain K96243).